A 74-amino-acid chain; its full sequence is uncharacterized protein (74 aa).

Positions 1–19 (MIGLIVVPILFAIKGIVVG) are cleaved as a signal peptide. A disordered region spans residues 26 to 74 (KFGKHSNTKDQKEDKDEDKRQSISQRKQHTEWPIEENRIQRRAPNQSAL). 2 stretches are compositionally biased toward basic and acidic residues: residues 32-46 (NTKD…DKRQ) and 53-64 (QHTEWPIEENRI).

This is an uncharacterized protein from Saccharomyces cerevisiae (strain ATCC 204508 / S288c) (Baker's yeast).